Reading from the N-terminus, the 271-residue chain is DNA-binding protein HEXBP (271 aa).

Composition is skewed to basic and acidic residues over residues 1-12 (MSETEDVKRPRT) and 21-42 (CGKE…DERS). The interval 1–42 (MSETEDVKRPRTESSTSCRNCGKEGHYARECPEADSKGDERS) is disordered. 4 consecutive CCHC-type zinc fingers follow at residues 16–33 (TSCR…ECPE), 43–60 (TTCF…ECPN), 70–87 (MTCF…DCPN), and 97–114 (FECY…DCPS). Positions 107-136 (HLSRDCPSSQGGSRGGYGQKRGRSGAQGGY) are disordered. Over residues 118-136 (GSRGGYGQKRGRSGAQGGY) the composition is skewed to gly residues. CCHC-type zinc fingers lie at residues 140-157 (RTCY…DCPN), 168-185 (RTCY…DCPN), 196-213 (RKCY…ECPS), 222-239 (RACY…ECPE), and 253-270 (RTCY…DCPS).

It localises to the nucleus. Its function is as follows. Binds to single-stranded DNA located in the 5' hexanucleotide repeat region of the L.major leishmanolysin (GP63) gene. In Leishmania major, this protein is DNA-binding protein HEXBP (HEXBP).